A 591-amino-acid polypeptide reads, in one-letter code: Solute carrier family 40 member 2, chloroplastic (591 aa).

A chloroplast-targeting transit peptide spans M1–D66. Transmembrane regions (helical) follow at residues W159 to F179, G206 to M226, W242 to V262, L293 to V313, I318 to N338, V391 to L411, P419 to I439, A452 to W472, L482 to V502, L518 to I540, and F547 to L569.

Belongs to the ferroportin (FP) (TC 2.A.100) family. SLC40A subfamily.

The protein resides in the membrane. It is found in the plastid. It localises to the chloroplast envelope. In terms of biological role, may be involved in iron transport and iron homeostasis. This chain is Solute carrier family 40 member 2, chloroplastic, found in Oryza sativa subsp. japonica (Rice).